The sequence spans 140 residues: Large-conductance mechanosensitive channel (140 aa).

Transmembrane regions (helical) follow at residues 9–29 (AFALKGNVVDLAVGVIIGAAF) and 86–106 (GSFLTIVLNFLILAFIIFLMV).

Belongs to the MscL family. As to quaternary structure, homopentamer.

It localises to the cell inner membrane. Its function is as follows. Channel that opens in response to stretch forces in the membrane lipid bilayer. May participate in the regulation of osmotic pressure changes within the cell. The sequence is that of Large-conductance mechanosensitive channel from Anaeromyxobacter dehalogenans (strain 2CP-1 / ATCC BAA-258).